A 635-amino-acid polypeptide reads, in one-letter code: DNA primase (635 aa).

A CHC2-type zinc finger spans residues 41-65; that stretch reads CPFHDEKSPSFSVSPAKQMYYCFGC. The region spanning 265–348 is the Toprim domain; sequence DEAILVEGYF…SGQVNLRILN (84 aa). Residues glutamate 271, aspartate 317, and aspartate 319 each contribute to the Mg(2+) site.

This sequence belongs to the DnaG primase family. Monomer. Interacts with DnaB. Zn(2+) serves as cofactor. It depends on Mg(2+) as a cofactor.

The catalysed reaction is ssDNA + n NTP = ssDNA/pppN(pN)n-1 hybrid + (n-1) diphosphate.. In terms of biological role, RNA polymerase that catalyzes the synthesis of short RNA molecules used as primers for DNA polymerase during DNA replication. The sequence is that of DNA primase from Synechocystis sp. (strain ATCC 27184 / PCC 6803 / Kazusa).